A 482-amino-acid polypeptide reads, in one-letter code: tRNA sulfurtransferase (482 aa).

The THUMP domain maps to 61 to 165 (EQAIEALACI…GEELFIVSAI (105 aa)). ATP-binding positions include 183–184 (LI), Lys265, Gly287, and Gln296. A disulfide bridge connects residues Cys344 and Cys456. The Rhodanese domain occupies 404–482 (SGDNEVILDI…GFANVKVYRP (79 aa)). Catalysis depends on Cys456, which acts as the Cysteine persulfide intermediate.

The protein belongs to the ThiI family.

The protein resides in the cytoplasm. It catalyses the reaction [ThiI sulfur-carrier protein]-S-sulfanyl-L-cysteine + a uridine in tRNA + 2 reduced [2Fe-2S]-[ferredoxin] + ATP + H(+) = [ThiI sulfur-carrier protein]-L-cysteine + a 4-thiouridine in tRNA + 2 oxidized [2Fe-2S]-[ferredoxin] + AMP + diphosphate. The catalysed reaction is [ThiS sulfur-carrier protein]-C-terminal Gly-Gly-AMP + S-sulfanyl-L-cysteinyl-[cysteine desulfurase] + AH2 = [ThiS sulfur-carrier protein]-C-terminal-Gly-aminoethanethioate + L-cysteinyl-[cysteine desulfurase] + A + AMP + 2 H(+). It participates in cofactor biosynthesis; thiamine diphosphate biosynthesis. Its function is as follows. Catalyzes the ATP-dependent transfer of a sulfur to tRNA to produce 4-thiouridine in position 8 of tRNAs, which functions as a near-UV photosensor. Also catalyzes the transfer of sulfur to the sulfur carrier protein ThiS, forming ThiS-thiocarboxylate. This is a step in the synthesis of thiazole, in the thiamine biosynthesis pathway. The sulfur is donated as persulfide by IscS. The polypeptide is tRNA sulfurtransferase (Aeromonas hydrophila subsp. hydrophila (strain ATCC 7966 / DSM 30187 / BCRC 13018 / CCUG 14551 / JCM 1027 / KCTC 2358 / NCIMB 9240 / NCTC 8049)).